Consider the following 320-residue polypeptide: MTSTGLSTNKPIIKALNISNVVISNVVVANKLRNKKAPIHYNDGKLVFQTPYLTANSILVQTSTPNIYQFDTVFKGKSKKRCKELFDFIDTLESDIANKIIRNGMNWFTTSDISIKSLIRQNNDETFFIRWLLDLSSCVFIDDSKNQINPHESLDVKDLVRFIVEVKGAFVQDNKIGLAVIVHKIRVKKPEPKDKVVPEYDFDSESESDNSEEKRFVPVLETEKAPHSKNTRIIQTNQSREYDLDYNQPKNPKQTTLKNTLDTRSKNNSNTTKQIFEQDDIFSDDDNAEQLVAKISPRPERSNKSKHKIADNFGYGGFFE.

A disordered region spans residues 196 to 273 (VVPEYDFDSE…RSKNNSNTTK (78 aa)). Residues 200–210 (YDFDSESESDN) show a composition bias toward acidic residues. Over residues 211–226 (SEEKRFVPVLETEKAP) the composition is skewed to basic and acidic residues. Positions 248–273 (QPKNPKQTTLKNTLDTRSKNNSNTTK) are enriched in polar residues.

This is an uncharacterized protein from Acanthamoeba polyphaga mimivirus (APMV).